Consider the following 319-residue polypeptide: Annexin A4 (319 aa).

Ala2 is subject to N-acetylalanine. Phosphothreonine is present on Thr7. Ser12 is subject to Phosphoserine. Annexin repeat units lie at residues 14-85 (FNAM…GMMT), 86-157 (PTVL…SLSA), 169-241 (ALVR…AIVK), and 245-316 (NKSA…VLCG). N6-acetyllysine is present on residues Lys213, Lys293, and Lys300.

It belongs to the annexin family.

The protein resides in the zymogen granule membrane. In terms of biological role, calcium/phospholipid-binding protein which promotes membrane fusion and is involved in exocytosis. The chain is Annexin A4 from Homo sapiens (Human).